A 340-amino-acid polypeptide reads, in one-letter code: Protein-arginine kinase (340 aa).

Positions 14–244 (IVITTRIRLA…EQIINQENLS (231 aa)) constitute a Phosphagen kinase C-terminal domain. ATP-binding positions include 17–21 (TTRIR), His-81, Arg-115, 166–170 (RASVM), and 197–202 (RGLWGE).

The protein belongs to the ATP:guanido phosphotransferase family.

It catalyses the reaction L-arginyl-[protein] + ATP = N(omega)-phospho-L-arginyl-[protein] + ADP + H(+). Its function is as follows. Catalyzes the specific phosphorylation of arginine residues in proteins. This chain is Protein-arginine kinase, found in Clostridium acetobutylicum (strain ATCC 824 / DSM 792 / JCM 1419 / IAM 19013 / LMG 5710 / NBRC 13948 / NRRL B-527 / VKM B-1787 / 2291 / W).